Consider the following 104-residue polypeptide: Large ribosomal subunit protein bL21 (104 aa).

The protein belongs to the bacterial ribosomal protein bL21 family. Part of the 50S ribosomal subunit. Contacts protein L20.

Functionally, this protein binds to 23S rRNA in the presence of protein L20. The chain is Large ribosomal subunit protein bL21 from Streptococcus gordonii (strain Challis / ATCC 35105 / BCRC 15272 / CH1 / DL1 / V288).